The following is a 256-amino-acid chain: 5-oxoprolinase subunit A 1 (256 aa).

Belongs to the LamB/PxpA family. In terms of assembly, forms a complex composed of PxpA, PxpB and PxpC.

The enzyme catalyses 5-oxo-L-proline + ATP + 2 H2O = L-glutamate + ADP + phosphate + H(+). Functionally, catalyzes the cleavage of 5-oxoproline to form L-glutamate coupled to the hydrolysis of ATP to ADP and inorganic phosphate. This Pseudomonas syringae pv. tomato (strain ATCC BAA-871 / DC3000) protein is 5-oxoprolinase subunit A 1.